The chain runs to 415 residues: Squalene synthase 12 (415 aa).

2 helical membrane passes run 281–301 (AIFR…ALCF) and 391–411 (LIAI…SNLL).

This sequence belongs to the phytoene/squalene synthase family. It depends on Mg(2+) as a cofactor. Mn(2+) serves as cofactor.

Its subcellular location is the endoplasmic reticulum membrane. It carries out the reaction 2 (2E,6E)-farnesyl diphosphate + NADH + H(+) = squalene + 2 diphosphate + NAD(+). It catalyses the reaction 2 (2E,6E)-farnesyl diphosphate + NADPH + H(+) = squalene + 2 diphosphate + NADP(+). It participates in terpene metabolism; lanosterol biosynthesis; lanosterol from farnesyl diphosphate: step 1/3. Component of the triterpene saponins (e.g. ginsenosides or panaxosides) and phytosterols biosynthetic pathways. Catalyzes the biosynthesis of squalene. In Panax ginseng (Korean ginseng), this protein is Squalene synthase 12.